The following is a 128-amino-acid chain: uncharacterized protein (128 aa).

This is an uncharacterized protein from Haemophilus influenzae (strain ATCC 51907 / DSM 11121 / KW20 / Rd).